Consider the following 269-residue polypeptide: Tungstate-binding protein TupA (269 aa).

A signal peptide spans 1–17; it reads MKKIISLALALALSASA.

The complex is composed of two ATP-binding proteins (TupC), two transmembrane proteins (TupB) and a solute-binding protein (TupA).

It is found in the periplasm. Functionally, part of an ABC transporter complex involved in ultra-high affinity tungstate uptake. Specifically binds tungstate. This chain is Tungstate-binding protein TupA, found in Campylobacter jejuni subsp. jejuni serotype O:2 (strain ATCC 700819 / NCTC 11168).